The following is a 66-amino-acid chain: Xenoxin-2 (66 aa).

4 disulfide bridges follow: Cys3-Cys24, Cys17-Cys37, Cys43-Cys58, and Cys59-Cys64.

In terms of tissue distribution, expressed by the skin dorsal glands.

It is found in the secreted. Functionally, lacks alpha-neurotoxic activity, has apparently no antibacterial activity, nor anti-coagulant potency. This Xenopus laevis (African clawed frog) protein is Xenoxin-2.